The primary structure comprises 222 residues: Cytidylate kinase (222 aa).

7-15 (GPSASGKSS) contacts ATP.

Belongs to the cytidylate kinase family. Type 1 subfamily.

It is found in the cytoplasm. It carries out the reaction CMP + ATP = CDP + ADP. The catalysed reaction is dCMP + ATP = dCDP + ADP. In Borrelia turicatae (strain 91E135), this protein is Cytidylate kinase.